The chain runs to 156 residues: Cell division protein SepF (156 aa).

It belongs to the SepF family. As to quaternary structure, homodimer. Interacts with FtsZ.

Its subcellular location is the cytoplasm. Its function is as follows. Cell division protein that is part of the divisome complex and is recruited early to the Z-ring. Probably stimulates Z-ring formation, perhaps through the cross-linking of FtsZ protofilaments. Its function overlaps with FtsA. This Bacillus cytotoxicus (strain DSM 22905 / CIP 110041 / 391-98 / NVH 391-98) protein is Cell division protein SepF.